Consider the following 399-residue polypeptide: Nitric oxide reductase (399 aa).

The zinc metallo-hydrolase stretch occupies residues 32–221; sequence HRGTTYNAYL…DEIQKINLAI (190 aa). Fe cation-binding residues include histidine 81, glutamate 83, aspartate 85, histidine 148, aspartate 167, and histidine 228. One can recognise a Flavodoxin-like domain in the interval 255-394; that stretch reads AVIAYDTMWL…RCYELGRKIA (140 aa).

In the N-terminal section; belongs to the zinc metallo-hydrolase group 3 family. In terms of assembly, homodimer. The cofactor is FMN. Requires Fe cation as cofactor.

Its function is as follows. Has nitric oxide reductase activity in combination with Hrb; probably involved in nitrosative stress protection. This Moorella thermoacetica (strain ATCC 39073 / JCM 9320) protein is Nitric oxide reductase (fprA).